A 233-amino-acid chain; its full sequence is Adenosine 5'-phosphosulfate reductase (233 aa).

[4Fe-4S] cluster-binding residues include C120, C121, C203, and C206. C229 acts as the Nucleophile; cysteine thiosulfonate intermediate in catalysis.

Belongs to the PAPS reductase family. CysH subfamily. [4Fe-4S] cluster is required as a cofactor.

It localises to the cytoplasm. The catalysed reaction is [thioredoxin]-disulfide + sulfite + AMP + 2 H(+) = adenosine 5'-phosphosulfate + [thioredoxin]-dithiol. It functions in the pathway sulfur metabolism; hydrogen sulfide biosynthesis; sulfite from sulfate. Functionally, catalyzes the formation of sulfite from adenosine 5'-phosphosulfate (APS) using thioredoxin as an electron donor. The sequence is that of Adenosine 5'-phosphosulfate reductase from Bacillus velezensis (strain DSM 23117 / BGSC 10A6 / LMG 26770 / FZB42) (Bacillus amyloliquefaciens subsp. plantarum).